The chain runs to 594 residues: UvrABC system protein C (594 aa).

Residues 14–91 (DKPGCYLMKD…IKKHDPKYNV (78 aa)) enclose the GIY-YIG domain. The 36-residue stretch at 196–231 (SDIKEQLRERMEKAAEDLDFERAKELRDTIAQMEKV) folds into the UVR domain.

Belongs to the UvrC family. As to quaternary structure, interacts with UvrB in an incision complex.

The protein resides in the cytoplasm. Functionally, the UvrABC repair system catalyzes the recognition and processing of DNA lesions. UvrC both incises the 5' and 3' sides of the lesion. The N-terminal half is responsible for the 3' incision and the C-terminal half is responsible for the 5' incision. In Shouchella clausii (strain KSM-K16) (Alkalihalobacillus clausii), this protein is UvrABC system protein C.